Here is a 261-residue protein sequence, read N- to C-terminus: Cytochrome c oxidase subunit 3 (261 aa).

Residues 1–15 (MTHQTHAYHMVNPSP) are Mitochondrial matrix-facing. The chain crosses the membrane as a helical span at residues 16–34 (WPLTGALSALLMTSGLTMW). The Mitochondrial intermembrane segment spans residues 35–40 (FHYNST). The helical transmembrane segment at 41 to 66 (ILLMLGLTTNMLTMYQWWRDIIREST) threads the bilayer. The Mitochondrial matrix portion of the chain corresponds to 67–72 (FQGHHT). Residues 73-105 (PTVQKGLRYGMILFIISEVLFFTGFFWAFYHSS) form a helical membrane-spanning segment. The Mitochondrial intermembrane portion of the chain corresponds to 106–128 (LAPTPELGGCWPPTGIHPLNPLE). A helical transmembrane segment spans residues 129-152 (VPLLNTSVLLASGVSITWAHHSLM). The Mitochondrial matrix portion of the chain corresponds to 153–155 (EGD). Residues 156 to 183 (RNHMLQALFITIALGIYFTLLQASEYYE) form a helical membrane-spanning segment. The Mitochondrial intermembrane segment spans residues 184–190 (APFTISD). A helical transmembrane segment spans residues 191-223 (GVYGSTFFVATGFHGLHVIIGSTFLIVCFFRQL). Residues 224-232 (KFHFTSSHH) are Mitochondrial matrix-facing. Residues 233–256 (FGFEAAAWYWHFVDVVWLFLYVSI) form a helical membrane-spanning segment. Residues 257 to 261 (YWWGS) lie on the Mitochondrial intermembrane side of the membrane.

It belongs to the cytochrome c oxidase subunit 3 family. Component of the cytochrome c oxidase (complex IV, CIV), a multisubunit enzyme composed of 14 subunits. The complex is composed of a catalytic core of 3 subunits MT-CO1, MT-CO2 and MT-CO3, encoded in the mitochondrial DNA, and 11 supernumerary subunits COX4I, COX5A, COX5B, COX6A, COX6B, COX6C, COX7A, COX7B, COX7C, COX8 and NDUFA4, which are encoded in the nuclear genome. The complex exists as a monomer or a dimer and forms supercomplexes (SCs) in the inner mitochondrial membrane with NADH-ubiquinone oxidoreductase (complex I, CI) and ubiquinol-cytochrome c oxidoreductase (cytochrome b-c1 complex, complex III, CIII), resulting in different assemblies (supercomplex SCI(1)III(2)IV(1) and megacomplex MCI(2)III(2)IV(2)).

Its subcellular location is the mitochondrion inner membrane. It catalyses the reaction 4 Fe(II)-[cytochrome c] + O2 + 8 H(+)(in) = 4 Fe(III)-[cytochrome c] + 2 H2O + 4 H(+)(out). Component of the cytochrome c oxidase, the last enzyme in the mitochondrial electron transport chain which drives oxidative phosphorylation. The respiratory chain contains 3 multisubunit complexes succinate dehydrogenase (complex II, CII), ubiquinol-cytochrome c oxidoreductase (cytochrome b-c1 complex, complex III, CIII) and cytochrome c oxidase (complex IV, CIV), that cooperate to transfer electrons derived from NADH and succinate to molecular oxygen, creating an electrochemical gradient over the inner membrane that drives transmembrane transport and the ATP synthase. Cytochrome c oxidase is the component of the respiratory chain that catalyzes the reduction of oxygen to water. Electrons originating from reduced cytochrome c in the intermembrane space (IMS) are transferred via the dinuclear copper A center (CU(A)) of subunit 2 and heme A of subunit 1 to the active site in subunit 1, a binuclear center (BNC) formed by heme A3 and copper B (CU(B)). The BNC reduces molecular oxygen to 2 water molecules using 4 electrons from cytochrome c in the IMS and 4 protons from the mitochondrial matrix. This Tragelaphus imberbis (Lesser kudu) protein is Cytochrome c oxidase subunit 3 (MT-CO3).